The sequence spans 270 residues: MAKVPDLFEDLKNCYSENEEYSSDIDHLSLNQKSFYDASYEPLPGDGMDKFMPLSTSKTSKTSRLNFKDSVVMAAANGKILKKRRLSLNQFITDDDLEAIANDTEEEIIKPRSATYSFQSNMKYNFMRVINHQCILNDARNQSIIRDPSGQYLMAAVLNNLDEAVKFDMAAYTSNDDSQLPVTLRISETRLFVSAQNEDEPVLLKELPETPKTIKDETSLLFFWEKHGNMDYFKSAAHPKLFIATRQEKLVHMAPGLPSVTDFQILENQS.

A propeptide spanning residues 1-112 (MAKVPDLFED…DTEEEIIKPR (112 aa)) is cleaved from the precursor. The residue at position 82 (lysine 82) is an N6-acetyllysine. Residues 82–86 (KKRRL) are nuclear localization signal (NLS). Residue serine 87 is modified to Phosphoserine. Asparagine 102 and asparagine 141 each carry an N-linked (GlcNAc...) asparagine glycan.

This sequence belongs to the IL-1 family. As to quaternary structure, monomer. Interacts with TMED10; the interaction mediates the translocation from the cytoplasm into the ERGIC (endoplasmic reticulum-Golgi intermediate compartment) and thereby secretion. Interacts with IL1R1. Interacts with S100A13; this interaction is the first step in the export of IL1A, followed by direct translocation of this complex across the plasma membrane. Post-translationally, acetylated within its nuclear localization sequence, which impacts subcellular localization. In terms of processing, proteolytic processed by CAPN1 in a calcium-dependent manner. Cleavage from 31 kDa precursor to 18 kDa biologically active molecules. Phosphorylated. Phosphorylation greatly enhances susceptibility to digestion and promotes the conversion of pre-IL1A alpha to the biologically active IL1A.

It localises to the nucleus. Its subcellular location is the cytoplasm. The protein localises to the secreted. Cytokine constitutively present intracellularly in nearly all resting non-hematopoietic cells that plays an important role in inflammation and bridges the innate and adaptive immune systems. After binding to its receptor IL1R1 together with its accessory protein IL1RAP, forms the high affinity interleukin-1 receptor complex. Signaling involves the recruitment of adapter molecules such as MYD88, IRAK1 or IRAK4. In turn, mediates the activation of NF-kappa-B and the three MAPK pathways p38, p42/p44 and JNK pathways. Within the cell, acts as an alarmin and cell death results in its liberation in the extracellular space after disruption of the cell membrane to induce inflammation and alert the host to injury or damage. In addition to its role as a danger signal, which occurs when the cytokine is passively released by cell necrosis, directly senses DNA damage and acts as signal for genotoxic stress without loss of cell integrity. The chain is Interleukin-1 alpha (IL1A) from Sus scrofa (Pig).